Consider the following 190-residue polypeptide: Somatotropin (190 aa).

Residues 1-17 form the signal peptide; the sequence is MNRVILLLSVMCVGVSS. 2 disulfide bridges follow: Cys-69-Cys-163 and Cys-180-Cys-188.

Belongs to the somatotropin/prolactin family.

It localises to the secreted. In terms of biological role, growth hormone plays an important role in growth control and is involved in the regulation of several anabolic processes. Implicated as an osmoregulatory substance important for seawater adaptation. The chain is Somatotropin (gh) from Paralichthys olivaceus (Bastard halibut).